The sequence spans 391 residues: Tryptophan synthase beta chain (391 aa).

An N6-(pyridoxal phosphate)lysine modification is found at Lys84.

The protein belongs to the TrpB family. As to quaternary structure, tetramer of two alpha and two beta chains. It depends on pyridoxal 5'-phosphate as a cofactor.

The catalysed reaction is (1S,2R)-1-C-(indol-3-yl)glycerol 3-phosphate + L-serine = D-glyceraldehyde 3-phosphate + L-tryptophan + H2O. Its pathway is amino-acid biosynthesis; L-tryptophan biosynthesis; L-tryptophan from chorismate: step 5/5. Its function is as follows. The beta subunit is responsible for the synthesis of L-tryptophan from indole and L-serine. In Thermoanaerobacter pseudethanolicus (strain ATCC 33223 / 39E) (Clostridium thermohydrosulfuricum), this protein is Tryptophan synthase beta chain.